The chain runs to 230 residues: Probable GTP-binding protein EngB (230 aa).

The 189-residue stretch at 36–224 folds into the EngB-type G domain; it reads ERPKVIVMGR…KHRINKRINI (189 aa). Residues 44–51, 69–73, 86–89, 166–169, and 201–203 contribute to the GTP site; these read GRSNVGKS, GVTLK, DLPG, NKMD, and VPA. The Mg(2+) site is built by S51 and T71.

It belongs to the TRAFAC class TrmE-Era-EngA-EngB-Septin-like GTPase superfamily. EngB GTPase family. It depends on Mg(2+) as a cofactor.

Functionally, necessary for normal cell division and for the maintenance of normal septation. This is Probable GTP-binding protein EngB from Methanococcus maripaludis (strain DSM 14266 / JCM 13030 / NBRC 101832 / S2 / LL).